A 241-amino-acid chain; its full sequence is Probable transcriptional regulatory protein CV_3123 (241 aa).

This sequence belongs to the TACO1 family.

It localises to the cytoplasm. This is Probable transcriptional regulatory protein CV_3123 from Chromobacterium violaceum (strain ATCC 12472 / DSM 30191 / JCM 1249 / CCUG 213 / NBRC 12614 / NCIMB 9131 / NCTC 9757 / MK).